The sequence spans 153 residues: Endoribonuclease YbeY (153 aa).

His-118, His-122, and His-128 together coordinate Zn(2+).

The protein belongs to the endoribonuclease YbeY family. The cofactor is Zn(2+).

Its subcellular location is the cytoplasm. Single strand-specific metallo-endoribonuclease involved in late-stage 70S ribosome quality control and in maturation of the 3' terminus of the 16S rRNA. The chain is Endoribonuclease YbeY from Staphylococcus saprophyticus subsp. saprophyticus (strain ATCC 15305 / DSM 20229 / NCIMB 8711 / NCTC 7292 / S-41).